We begin with the raw amino-acid sequence, 102 residues long: Turripeptide OL55-like (102 aa).

In terms of processing, contains 8 disulfide bonds. Expressed by the venom duct.

Its subcellular location is the secreted. Acts as a neurotoxin by inhibiting an ion channel. The sequence is that of Turripeptide OL55-like from Lophiotoma acuta (Marbled turris).